The following is a 167-amino-acid chain: MASSCPCGANRTYQQCCEIAHNNHADVKTPEQLMRSRYSAHVLGLVDYVVKTYHPSCNAEEQREGIAQSIDSDWCKLEVVKAEAGSHENEGFVEFNAYFNEDGQRYCLSERSRFVKENGLWYYIDGTFPEEESEQDPRLNQSISSLKVGRNDPCICGSGKKFKKCCG.

It belongs to the UPF0225 family.

This chain is UPF0225 protein VP1145, found in Vibrio parahaemolyticus serotype O3:K6 (strain RIMD 2210633).